The primary structure comprises 553 residues: Chaperonin GroEL 1 (553 aa).

Residues threonine 29–proline 32, aspartate 86–threonine 90, glycine 413, asparagine 476–leucine 478, and aspartate 492 each bind ATP. A disordered region spans residues lysine 521–glycine 542. The span at aspartate 533–glycine 542 shows a compositional bias: gly residues.

The protein belongs to the chaperonin (HSP60) family. As to quaternary structure, forms a cylinder of 14 subunits composed of two heptameric rings stacked back-to-back. Interacts with the co-chaperonin GroES.

It localises to the cytoplasm. It carries out the reaction ATP + H2O + a folded polypeptide = ADP + phosphate + an unfolded polypeptide.. In terms of biological role, together with its co-chaperonin GroES, plays an essential role in assisting protein folding. The GroEL-GroES system forms a nano-cage that allows encapsulation of the non-native substrate proteins and provides a physical environment optimized to promote and accelerate protein folding. The polypeptide is Chaperonin GroEL 1 (Synechococcus sp. (strain WH7803)).